Reading from the N-terminus, the 339-residue chain is tRNA N6-adenosine threonylcarbamoyltransferase (339 aa).

Residues histidine 111 and histidine 115 each contribute to the Fe cation site. Substrate contacts are provided by residues 134–138 (VVSGG), aspartate 167, glycine 180, and asparagine 279. Aspartate 307 serves as a coordination point for Fe cation.

The protein belongs to the KAE1 / TsaD family. Fe(2+) is required as a cofactor.

The protein resides in the cytoplasm. The enzyme catalyses L-threonylcarbamoyladenylate + adenosine(37) in tRNA = N(6)-L-threonylcarbamoyladenosine(37) in tRNA + AMP + H(+). Its function is as follows. Required for the formation of a threonylcarbamoyl group on adenosine at position 37 (t(6)A37) in tRNAs that read codons beginning with adenine. Is involved in the transfer of the threonylcarbamoyl moiety of threonylcarbamoyl-AMP (TC-AMP) to the N6 group of A37, together with TsaE and TsaB. TsaD likely plays a direct catalytic role in this reaction. The sequence is that of tRNA N6-adenosine threonylcarbamoyltransferase from Syntrophobacter fumaroxidans (strain DSM 10017 / MPOB).